Consider the following 156-residue polypeptide: Small ribosomal subunit protein uS7 (156 aa).

The protein belongs to the universal ribosomal protein uS7 family. Part of the 30S ribosomal subunit. Contacts proteins S9 and S11.

One of the primary rRNA binding proteins, it binds directly to 16S rRNA where it nucleates assembly of the head domain of the 30S subunit. Is located at the subunit interface close to the decoding center, probably blocks exit of the E-site tRNA. The chain is Small ribosomal subunit protein uS7 from Prochlorococcus marinus (strain SARG / CCMP1375 / SS120).